The sequence spans 384 residues: Nodal homolog 2-B (384 aa).

The signal sequence occupies residues 1–18; that stretch reads MASLGAILLFAIASLMHG. A propeptide spanning residues 19 to 283 is cleaved from the precursor; that stretch reads RPIHSDRKGA…RVADARRHRR (265 aa). Asparagine 71, asparagine 173, and asparagine 344 each carry an N-linked (GlcNAc...) asparagine glycan. Cysteine 306 and cysteine 372 are joined by a disulfide.

It belongs to the TGF-beta family. Homodimer; disulfide-linked. Forms heterodimers with the TGF-beta family member derriere. Interacts with tsku; enhances nodal2 activity.

The protein localises to the secreted. Its function is as follows. Cooperation and regulatory loops of multiple nodals are essential for mesendoderm patterning in early embryos. Essential for mesoderm formation and axial patterning during embryonic development. Activates the activin-like signaling pathway to induce dorsal and ventral mesoderm in animal cap ectoderm. In addition, also dorsalizes ventral marginal zone (VMZ) tissues during gastrulation. Induces muscle actin. Appears to act as both a short-range and long-range morphogen. The unprocessed protein inhibits bmp- and wnt-signaling. In Xenopus laevis (African clawed frog), this protein is Nodal homolog 2-B (nodal2-b).